The primary structure comprises 184 residues: UPF0215 protein MJ1150 (184 aa).

This sequence belongs to the UPF0215 family.

This is UPF0215 protein MJ1150 from Methanocaldococcus jannaschii (strain ATCC 43067 / DSM 2661 / JAL-1 / JCM 10045 / NBRC 100440) (Methanococcus jannaschii).